A 1166-amino-acid polypeptide reads, in one-letter code: Calcium-activated potassium channel subunit alpha-1 (1166 aa).

Gly residues predominate over residues 1 to 15 (MANGGGGGGGGGGGS). 2 disordered regions span residues 1–20 (MANG…LRMS) and 30–51 (LDAS…SVHE). The Extracellular segment spans residues 1–74 (MANGGGGGGG…VPCDSRGQRM (74 aa)). A compositionally biased stretch (low complexity) spans 33–48 (SSSSSSSSSSSSSSSS). A helical membrane pass occupies residues 75-95 (WWAFLASSMVTFFGGLFIILL). The Cytoplasmic portion of the chain corresponds to 96-166 (WRTLKYLWTV…MISAQTLTGR (71 aa)). 3 S-palmitoyl cysteine lipidation sites follow: Cys106, Cys107, and Cys109. Thr139 is modified (phosphothreonine; by CamK2). The helical transmembrane segment at 167–187 (VLVVLVFALSIGALVIYFIDS) threads the bilayer. Residues 188-202 (SNPIESCQNFYKDFT) are Extracellular-facing. Residues 203–223 (LQIDMAFNVFFLLYFGLRFIA) form a helical membrane-spanning segment. Residues 224-227 (ANDK) are Cytoplasmic-facing. A helical transmembrane segment spans residues 228–248 (LWFWLEVNSVVDFFTVPPVFV). Topologically, residues 249–252 (SVYL) are extracellular. Residues 253–273 (NRSWLGLRFLRALRLIQFSEI) traverse the membrane as a helical; Voltage-sensor segment. Residues 274–288 (LQFLNILKTSNSIKL) are Cytoplasmic-facing. The helical transmembrane segment at 289–309 (VNLLSIFISTWLTAAGFIHLV) threads the bilayer. The Extracellular portion of the chain corresponds to 310–323 (ENSGDPWENFQNNQ). Positions 324-346 (ALTYWECVYLLMVTMSTVGYGDV) form an intramembrane region, pore-forming. The Selectivity for potassium signature appears at 340-343 (TVGY). Over 347–355 (YAKTTLGRL) the chain is Extracellular. Residues 356–376 (FMVFFILGGLAMFASYVPEII) traverse the membrane as a helical segment. Residues 377–1166 (ELIGNRKKYG…KQKYVQEERL (790 aa)) lie on the Cytoplasmic side of the membrane. An RCK N-terminal 1 domain is found at 395 to 537 (RKHIVVCGHI…WNWKEGDDAI (143 aa)). Residues Glu427, Gln450, and Glu452 each contribute to the Mg(2+) site. The tract at residues 544 to 564 (LGFIAQSCLAQGLSTMLANLF) is segment S7. Positions 601–621 (LSFPTVCELCFVKLKLLMIAI) are segment S8. The heme-binding motif stretch occupies residues 665 to 669 (CKACH). Residues 689 to 717 (EQPSTLSPKKKQRNGGMRNSPSSSPKLMR) are disordered. Residue Thr693 is modified to Phosphothreonine. Ser695, Ser708, and Ser712 each carry phosphoserine. The interval 767–787 (VLSGHVVVCIFGDVSSALIGL) is segment S9. In terms of domain architecture, RCK N-terminal 2 spans 769–913 (SGHVVVCIFG…MDRSSPDNSP (145 aa)). Thr900 is subject to Phosphothreonine. Ser908 and Ser912 each carry phosphoserine. A Calcium bowl motif is present at residues 933–955 (TELVNDTNVQFLDQDDDDDPDTE). Ca(2+)-binding residues include Gln942, Asp945, Asp948, and Asp950. Positions 962–982 (FACGTAFAVSVLDSLMSATYF) are segment S10. Positions 1116-1141 (RASLSHSSHSSQSSSKKSSSVHSIPS) are enriched in low complexity. The disordered stretch occupies residues 1116–1166 (RASLSHSSHSSQSSSKKSSSVHSIPSTANRQNRPKSRESRDKQKYVQEERL). The span at 1150–1166 (KSRESRDKQKYVQEERL) shows a compositional bias: basic and acidic residues. Ser1151 and Ser1154 each carry phosphoserine; by PKG.

Belongs to the potassium channel family. Calcium-activated (TC 1.A.1.3) subfamily. KCa1.1/KCNMA1 sub-subfamily. Homotetramer; which constitutes the calcium-activated potassium channel. Interacts with beta subunits KCNMB1, KCNMB2, KCNMB3 and KCNMB4. Interacts with gamma subunits LRRC26, LRRC38, LRRC52 and LRRC55. Beta and gamma subunits are accessory, and modulate its activity. Interacts with RAB11B. In terms of processing, phosphorylated. Stimulated by PKG, but not by PKA. In smooth muscles, phosphorylation affects its activity. Phosphorylated. Exclusively stimulated by PKA. In smooth muscles, phosphorylation affects its activity. Post-translationally, incremental phosphorylation of Thr-139 of the KCNMA1 tetramer changes the response to ethanol from increased activation to inhibition of channel activity. In terms of processing, palmitoylation by ZDHHC22 and ZDHHC23 within the intracellular linker between the S0 and S1 transmembrane domains regulates localization to the plasma membrane. Depalmitoylated by LYPLA1 and LYPLAL1, leading to retard exit from the trans-Golgi network.

It is found in the cell membrane. The catalysed reaction is K(+)(in) = K(+)(out). Its activity is regulated as follows. Ethanol and carbon monoxide-bound heme increase channel activation. Heme inhibits channel activation. Phosphorylation of Thr-139 leads to inhibition of channel activity by ethanol. Functionally, potassium channel activated by both membrane depolarization or increase in cytosolic Ca(2+) that mediates export of K(+). It is also activated by concentration of cytosolic Mg(2+). Its activation dampens the excitatory events that elevate the cytosolic Ca(2+) concentration and/or depolarize the cell membrane. It therefore contributes to repolarization of the membrane potential. Plays a key role in controlling excitability in a number of systems, such as regulation of the contraction of smooth muscle, the tuning of hair cells in the cochlea, regulation of transmitter release, and innate immunity. In smooth muscles, its activation by high level of Ca(2+), caused by ryanodine receptors in the sarcoplasmic reticulum, regulates the membrane potential. In cochlea cells, its number and kinetic properties partly determine the characteristic frequency of each hair cell and thereby helps to establish a tonotopic map. Kinetics of KCNMA1 channels are determined by alternative splicing, phosphorylation status and its combination with modulating beta subunits. Highly sensitive to both iberiotoxin (IbTx) and charybdotoxin (CTX). This Bos taurus (Bovine) protein is Calcium-activated potassium channel subunit alpha-1 (KCNMA1).